Reading from the N-terminus, the 285-residue chain is Small ribosomal subunit protein uS2 (285 aa).

Residues 229–285 (RHNGKSNAAEEPMAEWERELLEQHEEQKSQDAAPAEQSAPAAEAPAETEQKDAPAAE) form a disordered region. Basic and acidic residues predominate over residues 243-257 (EWERELLEQHEEQKS). A compositionally biased stretch (low complexity) spans 260 to 275 (AAPAEQSAPAAEAPAE). The segment covering 276–285 (TEQKDAPAAE) has biased composition (basic and acidic residues).

It belongs to the universal ribosomal protein uS2 family.

The polypeptide is Small ribosomal subunit protein uS2 (Kocuria rhizophila (strain ATCC 9341 / DSM 348 / NBRC 103217 / DC2201)).